The chain runs to 199 residues: Probable GTP-binding protein EngB (199 aa).

One can recognise an EngB-type G domain in the interval 28–199 (DLPEIALAGR…DSWDAILEQV (172 aa)). Residues 36 to 43 (GRSNVGKS), 63 to 67 (GKTQL), 81 to 84 (DVPG), 148 to 151 (TKAD), and 180 to 182 (FSS) contribute to the GTP site. Mg(2+) is bound by residues serine 43 and threonine 65.

The protein belongs to the TRAFAC class TrmE-Era-EngA-EngB-Septin-like GTPase superfamily. EngB GTPase family. Mg(2+) is required as a cofactor.

In terms of biological role, necessary for normal cell division and for the maintenance of normal septation. The protein is Probable GTP-binding protein EngB of Streptococcus pyogenes serotype M6 (strain ATCC BAA-946 / MGAS10394).